The following is a 418-amino-acid chain: 4-hydroxy-3-methylbut-2-en-1-yl diphosphate synthase (flavodoxin) (418 aa).

Cys305, Cys308, Cys351, and Glu358 together coordinate [4Fe-4S] cluster.

This sequence belongs to the IspG family. [4Fe-4S] cluster is required as a cofactor.

The enzyme catalyses (2E)-4-hydroxy-3-methylbut-2-enyl diphosphate + oxidized [flavodoxin] + H2O + 2 H(+) = 2-C-methyl-D-erythritol 2,4-cyclic diphosphate + reduced [flavodoxin]. Its pathway is isoprenoid biosynthesis; isopentenyl diphosphate biosynthesis via DXP pathway; isopentenyl diphosphate from 1-deoxy-D-xylulose 5-phosphate: step 5/6. In terms of biological role, converts 2C-methyl-D-erythritol 2,4-cyclodiphosphate (ME-2,4cPP) into 1-hydroxy-2-methyl-2-(E)-butenyl 4-diphosphate. The chain is 4-hydroxy-3-methylbut-2-en-1-yl diphosphate synthase (flavodoxin) from Bartonella bacilliformis (strain ATCC 35685 / KC583 / Herrer 020/F12,63).